We begin with the raw amino-acid sequence, 295 residues long: ATP synthase gamma chain (295 aa).

Belongs to the ATPase gamma chain family. F-type ATPases have 2 components, CF(1) - the catalytic core - and CF(0) - the membrane proton channel. CF(1) has five subunits: alpha(3), beta(3), gamma(1), delta(1), epsilon(1). CF(0) has three main subunits: a, b and c.

The protein localises to the cell membrane. Produces ATP from ADP in the presence of a proton gradient across the membrane. The gamma chain is believed to be important in regulating ATPase activity and the flow of protons through the CF(0) complex. This Caldanaerobacter subterraneus subsp. tengcongensis (strain DSM 15242 / JCM 11007 / NBRC 100824 / MB4) (Thermoanaerobacter tengcongensis) protein is ATP synthase gamma chain.